Here is a 1011-residue protein sequence, read N- to C-terminus: Antigenic heat-stable 120 kDa protein (1011 aa).

Disordered stretches follow at residues 1-37 (DTSEFDPLANKEYTEEQKQTEEQEQKEFLSQTTTPAL), 54-73 (TPSMSALSGNISPDSQTSDP), and 348-396 (GQSK…PQSQ). Over residues 12-27 (EYTEEQKQTEEQEQKE) the composition is skewed to basic and acidic residues. 2 stretches are compositionally biased toward polar residues: residues 348 to 373 (GQSKEQPLITPQQTTSSSVEPPQYKQ) and 380 to 396 (PTNQPLQPETSQMPQSQ).

It localises to the cytoplasm. The sequence is that of Antigenic heat-stable 120 kDa protein (sca4) from Rickettsia sibirica subsp. mongolitimonae (Rickettsia mongolotimonae).